Here is a 642-residue protein sequence, read N- to C-terminus: 1-deoxy-D-xylulose-5-phosphate synthase (642 aa).

Residues H79 and 120–122 (AHS) each bind thiamine diphosphate. A Mg(2+)-binding site is contributed by D151. Thiamine diphosphate-binding positions include 152–153 (GS), N180, Y290, and E372. N180 contributes to the Mg(2+) binding site.

The protein belongs to the transketolase family. DXPS subfamily. Homodimer. Mg(2+) is required as a cofactor. The cofactor is thiamine diphosphate.

It catalyses the reaction D-glyceraldehyde 3-phosphate + pyruvate + H(+) = 1-deoxy-D-xylulose 5-phosphate + CO2. It functions in the pathway metabolic intermediate biosynthesis; 1-deoxy-D-xylulose 5-phosphate biosynthesis; 1-deoxy-D-xylulose 5-phosphate from D-glyceraldehyde 3-phosphate and pyruvate: step 1/1. Catalyzes the acyloin condensation reaction between C atoms 2 and 3 of pyruvate and glyceraldehyde 3-phosphate to yield 1-deoxy-D-xylulose-5-phosphate (DXP). This Beijerinckia indica subsp. indica (strain ATCC 9039 / DSM 1715 / NCIMB 8712) protein is 1-deoxy-D-xylulose-5-phosphate synthase.